Reading from the N-terminus, the 100-residue chain is Cell division topological specificity factor (100 aa).

Belongs to the MinE family.

Functionally, prevents the cell division inhibition by proteins MinC and MinD at internal division sites while permitting inhibition at polar sites. This ensures cell division at the proper site by restricting the formation of a division septum at the midpoint of the long axis of the cell. This chain is Cell division topological specificity factor, found in Synechococcus sp. (strain JA-2-3B'a(2-13)) (Cyanobacteria bacterium Yellowstone B-Prime).